We begin with the raw amino-acid sequence, 359 residues long: S-adenosylmethionine:tRNA ribosyltransferase-isomerase (359 aa).

Belongs to the QueA family. Monomer.

Its subcellular location is the cytoplasm. The enzyme catalyses 7-aminomethyl-7-carbaguanosine(34) in tRNA + S-adenosyl-L-methionine = epoxyqueuosine(34) in tRNA + adenine + L-methionine + 2 H(+). It functions in the pathway tRNA modification; tRNA-queuosine biosynthesis. In terms of biological role, transfers and isomerizes the ribose moiety from AdoMet to the 7-aminomethyl group of 7-deazaguanine (preQ1-tRNA) to give epoxyqueuosine (oQ-tRNA). The sequence is that of S-adenosylmethionine:tRNA ribosyltransferase-isomerase from Alcanivorax borkumensis (strain ATCC 700651 / DSM 11573 / NCIMB 13689 / SK2).